The primary structure comprises 597 residues: MKIEDKLVASVINGLKALYGQEVPEKMVQLQKTKKEFEGHLTLVVFPFLKMSRKGPEQTAQEIGEYLKANEPAVAAFNVIKGFLNLTIASATWIELLNEIQSDEEYGLVKATETSPLVMIEYSSPNTNKPLHLGHVRNNLLGNALANIVAANGNRVVKTNIVNDRGIHICKSMLAWKKYGNGETPESTGKKGDHLVGDYYVSFDKHYKAELAELMEKGMTKEEAEAASPLMQEAREMLVKWEAGDPEVRALWEMMNNWVYAGFDETYRKMGVGFDKIYYESNTYLEGKEKVMEGLEKGFFFKKEDGSVWVDLTAEGLDHKLLLRGDGTSVYMTQDIGTAKLRFADYPIDKMIYVVGNEQNYHFQVLSILLDKLGFEWGKGLVHFSYGMVELPEGKMKSREGTVVDADDLMEEMVSTAKETSQELGKLDGLTQEEADDIARIVGLGALKYFILKVDARKNMTFNPKESIDFNGNTGPFIQYTYARIQSVLRKAAESGIVIPEQIPAGIELSEKEEGLIQLVADFAAVVKQAGEDYSPSIIANYTYDLVKEYNQFYHDFSILREENEAVKVFRIALSANVAKVVRLGMGLLGIEVPSRM.

Residues 125–135 carry the 'HIGH' region motif; that stretch reads PNTNKPLHLGH.

The protein belongs to the class-I aminoacyl-tRNA synthetase family. As to quaternary structure, monomer.

It is found in the cytoplasm. The catalysed reaction is tRNA(Arg) + L-arginine + ATP = L-arginyl-tRNA(Arg) + AMP + diphosphate. The protein is Arginine--tRNA ligase of Bacteroides thetaiotaomicron (strain ATCC 29148 / DSM 2079 / JCM 5827 / CCUG 10774 / NCTC 10582 / VPI-5482 / E50).